We begin with the raw amino-acid sequence, 358 residues long: Neuronal-specific septin-3 (358 aa).

A compositionally biased stretch (basic and acidic residues) spans 1 to 10 (MSKGLPEART). The segment at 1-29 (MSKGLPEARTDTAMSELVPEPRPKPAVPM) is disordered. The Septin-type G domain occupies 58–331 (TGFDFNIMVV…ETYRAKRLND (274 aa)). The segment at 68-75 (GQSGLGKS) is G1 motif. 68 to 75 (GQSGLGKS) is a binding site for GTP. Phosphoserine is present on Ser-91. Residue Thr-102 participates in GTP binding. Positions 125-128 (DTPG) are G3 motif. The interval 207–210 (AKAD) is G4 motif. GTP-binding positions include 208–216 (KADTMTLEE), Gly-265, and Arg-280.

This sequence belongs to the TRAFAC class TrmE-Era-EngA-EngB-Septin-like GTPase superfamily. Septin GTPase family. As to quaternary structure, septins polymerize into heterooligomeric protein complexes that form filaments, and can associate with cellular membranes, actin filaments and microtubules. GTPase activity is required for filament formation. Post-translationally, phosphorylated by PKG on serine residues. Phosphorylated by PKG on Ser-91. In terms of tissue distribution, brain-specific, with highest expression in the hippocampal CA3 region (at protein level).

It localises to the cytoplasm. It is found in the cytoskeleton. Its subcellular location is the synapse. Its function is as follows. Filament-forming cytoskeletal GTPase. May play a role in cytokinesis (Potential). The sequence is that of Neuronal-specific septin-3 from Rattus norvegicus (Rat).